Consider the following 515-residue polypeptide: Maturase K (515 aa).

The protein belongs to the intron maturase 2 family. MatK subfamily.

It localises to the plastid. It is found in the chloroplast. Its function is as follows. Usually encoded in the trnK tRNA gene intron. Probably assists in splicing its own and other chloroplast group II introns. In Trillium luteum (Yellow wakerobin), this protein is Maturase K.